Consider the following 1222-residue polypeptide: Chitin synthase 4 (1222 aa).

The tract at residues 1 to 108 (MSLPERPGGI…NRIDKDHPNY (108 aa)) is disordered. The segment covering 51 to 68 (LSANSFAETIPSPNNSFV) has biased composition (polar residues). Asparagine 64 is a glycosylation site (N-linked (GlcNAc...) asparagine). A compositionally biased stretch (basic and acidic residues) spans 94 to 107 (IRPERNRIDKDHPN). Asparagine 116 carries N-linked (GlcNAc...) asparagine glycosylation. Residues 136 to 199 (TTDVSGSRSQ…KSTKKRSTPQ (64 aa)) are disordered. A compositionally biased stretch (polar residues) spans 137 to 154 (TDVSGSRSQTLDGVSDTS). Residues 176 to 196 (SAKRVSRHKSGKITKSTKKRS) are compositionally biased toward basic residues. 2 consecutive transmembrane segments (helical) span residues 204–224 (PPSFWNVYCAIITFWCPDFML) and 242–262 (MGLISLILLIMGCVGFITFGF). N-linked (GlcNAc...) asparagine glycosylation is found at asparagine 378 and asparagine 418. A helical transmembrane segment spans residues 509-529 (YVFLALILSVVGSRFVLALIF). The interval 595–662 (RFSTVYGPDR…PPSDGPGPAG (68 aa)) is disordered. The span at 608–643 (NKRVPTTMASSGGSGSQLLHPNSMYRQGNDSRSSFL) shows a compositional bias: polar residues. Residues asparagine 636 and asparagine 1031 are each glycosylated (N-linked (GlcNAc...) asparagine). 3 helical membrane-spanning segments follow: residues 1056 to 1076 (FIVFVELMGTLVLPAAIAFTF), 1090 to 1110 (VIPLILLALILGLPAVLIVIT), and 1116 to 1136 (YLVWMMIYLFSLPVWNFVLPV). Positions 1201–1222 (GGGNSWSMPPGHQYHDDYYSDA) are disordered. Residues 1213 to 1222 (QYHDDYYSDA) are compositionally biased toward basic and acidic residues.

Belongs to the chitin synthase family. Class IV subfamily.

It is found in the cell membrane. It catalyses the reaction [(1-&gt;4)-N-acetyl-beta-D-glucosaminyl](n) + UDP-N-acetyl-alpha-D-glucosamine = [(1-&gt;4)-N-acetyl-beta-D-glucosaminyl](n+1) + UDP + H(+). Polymerizes chitin, a structural polymer of the cell wall and septum, by transferring the sugar moiety of UDP-GlcNAc to the non-reducing end of the growing chitin polymer. Plays a role in cell wall integrity and is involved in tolerance to hyperosmotic conditions. Required to successfully penetrate the host plants and thus plays a key role in pathogenicity. This is Chitin synthase 4 from Verticillium dahliae (strain VdLs.17 / ATCC MYA-4575 / FGSC 10137) (Verticillium wilt).